Consider the following 258-residue polypeptide: MSASNSLVRVEPLAPSFAAVAGQWAQRLGLPQELAEAEFALQVGEAGLQLQLLEAQAPGPVRVDFVEGAAAHRRQFGGGSGQMIAKAVGIQPGIRPRVLDATAGLGRDAFVLATLGCEVSLIERQPLIAALLDDGLSRAAADADVAAIAARMRLLEGNAIELMQHWRGEPPQVIYLDPMFPHRDKSALVKKEMRLFRPFVGDDLDAPALLSAALELASHRVVVKRPRKAPAIDGSKPGYSLEGKSSRYDIYPKKKLQA.

S-adenosyl-L-methionine is bound by residues 107 to 108 (RD), 123 to 124 (ER), and Asp177.

This sequence belongs to the methyltransferase superfamily. RsmJ family.

The protein localises to the cytoplasm. The catalysed reaction is guanosine(1516) in 16S rRNA + S-adenosyl-L-methionine = N(2)-methylguanosine(1516) in 16S rRNA + S-adenosyl-L-homocysteine + H(+). Its function is as follows. Specifically methylates the guanosine in position 1516 of 16S rRNA. In Stutzerimonas stutzeri (strain A1501) (Pseudomonas stutzeri), this protein is Ribosomal RNA small subunit methyltransferase J.